Consider the following 102-residue polypeptide: Protamine-2 (102 aa).

Phosphoserine is present on residues Ser8, Ser10, and Ser37. Disordered regions lie at residues 15-41 (EVYGQQLHGQEQGHHDQEEQGLSPEQV) and 66-102 (IHRQQHRSCKRRRRHSCRHRRKHRRGCRTRRRTCRRH).

It belongs to the protamine P2 family. Interacts with TDRP. In terms of processing, proteolytic processing into mature chains is required for histone eviction during spermatogenesis. Transition proteins (TNP1 and TNP2) are required for processing. Testis.

It localises to the nucleus. The protein localises to the chromosome. Protamines substitute for histones in the chromatin of sperm during the haploid phase of spermatogenesis. They compact sperm DNA into a highly condensed, stable and inactive complex. The polypeptide is Protamine-2 (PRM2) (Pongo pygmaeus (Bornean orangutan)).